Consider the following 435-residue polypeptide: MARLLTNSQAEELHKSIIAYLSANGLPETTAILRKELGVTEHDFNATAVKKYETLLEKNGPLLFAYRESRDSKAWLPQRPRYSLHSHRDTINCIAFHPKYSSIASGSDDCTIKIWDWELGELEVTLKGHTRAVRDLDYGSPPGAVGVLLASCSSDLTIKLWDPADGYKNIRTLQGHDHIVSAVRFIPNGSLLASASRDMDVRLWDVTNGYCVKTIQGHTGWVRDVCASLDGRFILSTGDDMTVRLWDISAKPENKLTMVGHENFNECCAIAPPTSYQYLAPLARLAKVSRAGSTAEFMATGSRDKTIKLWDARGTCLMTLTGHDNWVRAIVFHPGGRYLLSVSDDKTLRCWDLSQEGKCVKTIRDTHGGFITCLRWAPAILKDTPTDAARALVRQIPDVAEIMKNATFEESFSDVQIRCVVATGSVDKKLQIFAG.

In terms of domain architecture, LisH spans 9 to 41 (QAEELHKSIIAYLSANGLPETTAILRKELGVTE). 8 WD repeats span residues 86-125 (SHRD…LEVT), 128-171 (GHTR…KNIR), 175-214 (GHDH…CVKT), 217-256 (GHTG…ENKL), 280-320 (APLA…LMTL), 322-361 (GHDN…KCVK), 366-396 (THGG…VRQI), and 397-434 (PDVA…QIFA).

This sequence belongs to the WD repeat LIS1/nudF family. In terms of assembly, self-associates. Interacts with nudE and dynein.

It is found in the cytoplasm. Its subcellular location is the cytoskeleton. The protein localises to the spindle pole. Positively regulates the activity of the minus-end directed microtubule motor protein dynein. May enhance dynein-mediated microtubule sliding by targeting dynein to the microtubule plus end. Required for nuclear migration during vegetative growth as well as development. Required for retrograde early endosome (EE) transport from the hyphal tip. Required for localization of dynein to the mitotic spindle poles. Recruits additional proteins to the dynein complex at SPBs. This chain is Nuclear distribution protein nudF 2, found in Aspergillus clavatus (strain ATCC 1007 / CBS 513.65 / DSM 816 / NCTC 3887 / NRRL 1 / QM 1276 / 107).